The chain runs to 241 residues: Uridylate kinase (241 aa).

Position 15 to 18 (15 to 18 (KLSG)) interacts with ATP. An involved in allosteric activation by GTP region spans residues 23 to 28 (GAEGFG). A UMP-binding site is contributed by G57. Residues G58 and R62 each coordinate ATP. UMP is bound by residues D77 and 138-145 (TGNPFFTT). Positions 165, 171, and 174 each coordinate ATP.

Belongs to the UMP kinase family. In terms of assembly, homohexamer.

The protein localises to the cytoplasm. It carries out the reaction UMP + ATP = UDP + ADP. The protein operates within pyrimidine metabolism; CTP biosynthesis via de novo pathway; UDP from UMP (UMPK route): step 1/1. With respect to regulation, allosterically activated by GTP. Inhibited by UTP. Catalyzes the reversible phosphorylation of UMP to UDP. The sequence is that of Uridylate kinase from Serratia proteamaculans (strain 568).